A 172-amino-acid polypeptide reads, in one-letter code: Iron-sulfur cluster assembly protein SufA (172 aa).

An N-terminal signal peptide occupies residues 1 to 19 (MFINIFLFLFAATINISSS). 3 residues coordinate [4Fe-4S] cluster: Cys96, Cys164, and Cys166.

This sequence belongs to the HesB/IscA family. In terms of assembly, homodimer.

The protein localises to the plastid. Its subcellular location is the apicoplast. Its pathway is cofactor biosynthesis; iron-sulfur cluster biosynthesis. Participates in the sulfur mobilization (SUF) pathway for iron-sulfur (Fe-S) cluster biogenesis. Involved in the pre-assembly of [4Fe-4S] clusters and their transfer to target proteins. The protein is Iron-sulfur cluster assembly protein SufA of Plasmodium berghei (strain Anka).